The sequence spans 525 residues: MESLVVHTVNAIWCIVIVGIFSVGYHVYGRAVVEQWRMRRSLKLQGVKGPPPSIFNGNVSEMQRIQSEAKHCSGDNIISHDYSSSLFPHFDHWRKQYGRIYTYSTGLKQHLYINHPEMVKELSQTNTLNLGRITHITKRLNPILGNGIITSNGPHWAHQRRIIAYEFTHDKIKGMVGLMVESAMPMLNKWEEMVKRGGEMGCDIRVDEDLKDVSADVIAKACFGSSFSKGKAIFSMIRDLLTAITKRSVLFRFNGFTDMVFGSKKHGDVDIDALEMELESSIWETVKEREIECKDTHKKDLMQLILEGAMRSCDGNLWDKSAYRRFVVDNCKSIYFAGHDSTAVSVSWCLMLLALNPSWQVKIRDEILSSCKNGIPDAESIPNLKTVTMVIQETMRLYPPAPIVGREASKDIRLGDLVVPKGVCIWTLIPALHRDPEIWGPDANDFKPERFSEGISKACKYPQSYIPFGLGPRTCVGKNFGMMEVKVLVSLIVSKFSFTLSPTYQHSPSHKLLVEPQHGVVIRVV.

Residues 1-3 (MES) lie on the Lumenal side of the membrane. The chain crosses the membrane as a helical; Signal-anchor for type III membrane protein span at residues 4–24 (LVVHTVNAIWCIVIVGIFSVG). At 25 to 525 (YHVYGRAVVE…PQHGVVIRVV (501 aa)) the chain is on the cytoplasmic side. A heme-binding site is contributed by C475.

It belongs to the cytochrome P450 family. Heme serves as cofactor. As to expression, expressed in the shoot apical meristem (SAM) and petioles of young leaves, in the leaf margin and petiole vein of cotyledons, and at low levels in the filaments of developing flowers. Not detected in siliques.

It is found in the endoplasmic reticulum membrane. Its function is as follows. Involved in the inactivation of early gibberellin (GA) intermediates. The protein is Cytochrome P450 714A2 (CYP714A2) of Arabidopsis thaliana (Mouse-ear cress).